The following is a 521-amino-acid chain: Tubulin-specific chaperone E (521 aa).

The region spanning 24–68 (GPVPPTAGVWLGVEWDHPERGKHDGSHDGVRYFTCRHPTGGSFVR) is the CAP-Gly domain. LRR repeat units lie at residues 147–168 (FVQS…AAIT), 173–194 (SLQE…SSLS), 199–220 (HLRV…HCAP), 224–245 (QVEE…EHVL), 247–268 (ALTV…EISH), 271–292 (RLER…DVPA), and 301–322 (ALKE…NELE). Residues 335 to 377 (NPLLHKEKNLETARQIMIARLGQLELLDMRQILSDERRGAELD) form the LRRCT domain.

This sequence belongs to the TBCE family. As to quaternary structure, supercomplex made of cofactors A to E. Cofactors A and D function by capturing and stabilizing tubulin in a quasi-native conformation. Cofactor E binds to the cofactor D-tubulin complex; interaction with cofactor C then causes the release of tubulin polypeptides that are committed to the native state.

It localises to the cytoplasm. It is found in the cytoskeleton. Tubulin-folding protein; involved in the second step of the tubulin folding pathway. This chain is Tubulin-specific chaperone E (tbce), found in Danio rerio (Zebrafish).